Here is a 252-residue protein sequence, read N- to C-terminus: Trans-aconitate 2-methyltransferase (252 aa).

It belongs to the methyltransferase superfamily. Tam family.

It localises to the cytoplasm. It catalyses the reaction trans-aconitate + S-adenosyl-L-methionine = (E)-3-(methoxycarbonyl)pent-2-enedioate + S-adenosyl-L-homocysteine. Its function is as follows. Catalyzes the S-adenosylmethionine monomethyl esterification of trans-aconitate. In Escherichia coli O139:H28 (strain E24377A / ETEC), this protein is Trans-aconitate 2-methyltransferase.